Consider the following 496-residue polypeptide: Apolipoprotein N-acyltransferase (496 aa).

6 consecutive transmembrane segments (helical) span residues isoleucine 6–proline 26, phenylalanine 50–valine 70, phenylalanine 77–serine 97, leucine 114–leucine 134, isoleucine 148–isoleucine 168, and leucine 183–methionine 203. Positions valine 220–threonine 464 constitute a CN hydrolase domain. The active-site Proton acceptor is the glutamate 259. Residue lysine 322 is part of the active site. Catalysis depends on cysteine 372, which acts as the Nucleophile. A helical membrane pass occupies residues phenylalanine 474–phenylalanine 494.

The protein belongs to the CN hydrolase family. Apolipoprotein N-acyltransferase subfamily.

The protein resides in the cell inner membrane. The enzyme catalyses N-terminal S-1,2-diacyl-sn-glyceryl-L-cysteinyl-[lipoprotein] + a glycerophospholipid = N-acyl-S-1,2-diacyl-sn-glyceryl-L-cysteinyl-[lipoprotein] + a 2-acyl-sn-glycero-3-phospholipid + H(+). It functions in the pathway protein modification; lipoprotein biosynthesis (N-acyl transfer). Its function is as follows. Catalyzes the phospholipid dependent N-acylation of the N-terminal cysteine of apolipoprotein, the last step in lipoprotein maturation. The chain is Apolipoprotein N-acyltransferase from Rickettsia typhi (strain ATCC VR-144 / Wilmington).